Reading from the N-terminus, the 364-residue chain is Phosrestin-2 (364 aa).

The protein belongs to the arrestin family. Post-translationally, phosphorylated, but does not undergo light-induced phosphorylation. Expressed specifically and abundantly in photoreceptor cells in retina and ocelli.

It localises to the cell projection. The protein resides in the rhabdomere. Regulates photoreceptor cell deactivation. Arr1 and Arr2 proteins are mediators of rhodopsin inactivation and are essential for the termination of the phototransduction cascade. Involved in regulating normal cycles of per nuclear accumulation in brain circadian neurons and thus is important for normal circadian behavior. In the dark, functions with Arr2 to promote the formation of cytosolic Bdbt foci, which are required for dco localization to photoreceptor nuclei where it phosphorylates and activates degradation of per. The polypeptide is Phosrestin-2 (Arr1) (Drosophila melanogaster (Fruit fly)).